The chain runs to 296 residues: Ethanolamine ammonia-lyase small subunit (296 aa).

Positions 209 and 230 each coordinate adenosylcob(III)alamin.

It belongs to the EutC family. In terms of assembly, the basic unit is a heterodimer which dimerizes to form tetramers. The heterotetramers trimerize; 6 large subunits form a core ring with 6 small subunits projecting outwards. Adenosylcob(III)alamin serves as cofactor.

It localises to the bacterial microcompartment. It carries out the reaction ethanolamine = acetaldehyde + NH4(+). It functions in the pathway amine and polyamine degradation; ethanolamine degradation. Catalyzes the deamination of various vicinal amino-alcohols to oxo compounds. Allows this organism to utilize ethanolamine as the sole source of nitrogen and carbon in the presence of external vitamin B12. The sequence is that of Ethanolamine ammonia-lyase small subunit from Lachnoclostridium phytofermentans (strain ATCC 700394 / DSM 18823 / ISDg) (Clostridium phytofermentans).